A 330-amino-acid chain; its full sequence is Phosphate acyltransferase (330 aa).

It belongs to the PlsX family. As to quaternary structure, homodimer. Probably interacts with PlsY.

The protein localises to the cytoplasm. The catalysed reaction is a fatty acyl-[ACP] + phosphate = an acyl phosphate + holo-[ACP]. It functions in the pathway lipid metabolism; phospholipid metabolism. In terms of biological role, catalyzes the reversible formation of acyl-phosphate (acyl-PO(4)) from acyl-[acyl-carrier-protein] (acyl-ACP). This enzyme utilizes acyl-ACP as fatty acyl donor, but not acyl-CoA. The chain is Phosphate acyltransferase from Streptococcus agalactiae serotype III (strain NEM316).